Reading from the N-terminus, the 352-residue chain is Holliday junction branch migration complex subunit RuvB (352 aa).

The tract at residues Met-1–Tyr-182 is large ATPase domain (RuvB-L). Residues Ile-21, Arg-22, Gly-63, Lys-66, Thr-67, Thr-68, Glu-129–Phe-131, Arg-172, Tyr-182, and Arg-219 contribute to the ATP site. Position 67 (Thr-67) interacts with Mg(2+). The tract at residues Glu-183–Glu-253 is small ATPAse domain (RuvB-S). Residues Glu-256–Asp-352 form a head domain (RuvB-H) region. DNA-binding residues include Arg-292, Arg-311, and Arg-316.

Belongs to the RuvB family. In terms of assembly, homohexamer. Forms an RuvA(8)-RuvB(12)-Holliday junction (HJ) complex. HJ DNA is sandwiched between 2 RuvA tetramers; dsDNA enters through RuvA and exits via RuvB. An RuvB hexamer assembles on each DNA strand where it exits the tetramer. Each RuvB hexamer is contacted by two RuvA subunits (via domain III) on 2 adjacent RuvB subunits; this complex drives branch migration. In the full resolvosome a probable DNA-RuvA(4)-RuvB(12)-RuvC(2) complex forms which resolves the HJ.

The protein resides in the cytoplasm. The catalysed reaction is ATP + H2O = ADP + phosphate + H(+). The RuvA-RuvB-RuvC complex processes Holliday junction (HJ) DNA during genetic recombination and DNA repair, while the RuvA-RuvB complex plays an important role in the rescue of blocked DNA replication forks via replication fork reversal (RFR). RuvA specifically binds to HJ cruciform DNA, conferring on it an open structure. The RuvB hexamer acts as an ATP-dependent pump, pulling dsDNA into and through the RuvAB complex. RuvB forms 2 homohexamers on either side of HJ DNA bound by 1 or 2 RuvA tetramers; 4 subunits per hexamer contact DNA at a time. Coordinated motions by a converter formed by DNA-disengaged RuvB subunits stimulates ATP hydrolysis and nucleotide exchange. Immobilization of the converter enables RuvB to convert the ATP-contained energy into a lever motion, pulling 2 nucleotides of DNA out of the RuvA tetramer per ATP hydrolyzed, thus driving DNA branch migration. The RuvB motors rotate together with the DNA substrate, which together with the progressing nucleotide cycle form the mechanistic basis for DNA recombination by continuous HJ branch migration. Branch migration allows RuvC to scan DNA until it finds its consensus sequence, where it cleaves and resolves cruciform DNA. This Chlorobium chlorochromatii (strain CaD3) protein is Holliday junction branch migration complex subunit RuvB.